The chain runs to 173 residues: MDVTIQHPWFKRTLGPFYPSRLFDQFFGEGLFEYDLLPFLSSTISPYYRQSLFRTVLDSGISEVRSDRDKFVIFLDVKHFSPEDLTVKVQEDFVEIHGKHNERQDDHGYISREFHRRYRLPSNVDQSALSCSLSADGMLTFSGPKVQSGLDAGHSERAIPVSREEKPSSAPSS.

Methionine 1 carries the N-acetylmethionine modification. The interval 1-63 (MDVTIQHPWF…RTVLDSGISE (63 aa)) is required for complex formation with BFSP1 and BFSP2. Glutamine 6 carries the post-translational modification Deamidated glutamine; partial. Serine 45 bears the Phosphoserine mark. Glutamine 50 is modified (deamidated glutamine; partial). Residues 52 to 162 (LFRTVLDSGI…GHSERAIPVS (111 aa)) form the sHSP domain. At lysine 70 the chain carries N6-acetyllysine. Position 90 is a deamidated glutamine; partial (glutamine 90). Position 99 is an N6-acetyllysine (lysine 99). Histidine 100 serves as a coordination point for Zn(2+). Deamidated asparagine; partial is present on asparagine 101. Zn(2+)-binding residues include glutamate 102 and histidine 107. Serine 122 carries the post-translational modification Phosphoserine. Asparagine 123 carries the post-translational modification Deamidated asparagine; partial. Positions 145–173 (KVQSGLDAGHSERAIPVSREEKPSSAPSS) are disordered. Deamidated glutamine; partial is present on glutamine 147. The span at 153 to 167 (GHSERAIPVSREEKP) shows a compositional bias: basic and acidic residues. Histidine 154 lines the Zn(2+) pocket. A glycan (O-linked (GlcNAc) serine) is linked at serine 162.

This sequence belongs to the small heat shock protein (HSP20) family. Heteromer composed of three CRYAA and one CRYAB subunits. Inter-subunit bridging via zinc ions enhances stability, which is crucial as there is no protein turn over in the lens. Can also form homodimers and homotetramers (dimers of dimers) which serve as the building blocks of homooligomers. Within homooligomers, the zinc-binding motif is created from residues of 3 different molecules. His-100 and Glu-102 from one molecule are ligands of the zinc ion, and His-107 and His-154 residues from additional molecules complete the site with tetrahedral coordination geometry. Part of a complex required for lens intermediate filament formation composed of BFSP1, BFSP2 and CRYAA. In terms of processing, acetylation at Lys-70 may increase chaperone activity. Undergoes age-dependent proteolytical cleavage at the C-terminus.

It localises to the cytoplasm. Its subcellular location is the nucleus. Contributes to the transparency and refractive index of the lens. Acts as a chaperone, preventing aggregation of various proteins under a wide range of stress conditions. Required for the correct formation of lens intermediate filaments as part of a complex composed of BFSP1, BFSP2 and CRYAA. This is Alpha-crystallin A chain (CRYAA) from Oryctolagus cuniculus (Rabbit).